Reading from the N-terminus, the 92-residue chain is DNA-directed RNA polymerase subunit Rpo11 (92 aa).

This sequence belongs to the archaeal Rpo11/eukaryotic RPB11/RPC19 RNA polymerase subunit family. As to quaternary structure, part of the RNA polymerase complex.

The protein localises to the cytoplasm. It carries out the reaction RNA(n) + a ribonucleoside 5'-triphosphate = RNA(n+1) + diphosphate. Functionally, DNA-dependent RNA polymerase (RNAP) catalyzes the transcription of DNA into RNA using the four ribonucleoside triphosphates as substrates. The chain is DNA-directed RNA polymerase subunit Rpo11 from Methanosarcina acetivorans (strain ATCC 35395 / DSM 2834 / JCM 12185 / C2A).